The following is a 271-amino-acid chain: Nodulin-26 (271 aa).

Transmembrane regions (helical) follow at residues 40–62 and 72–94; these read LVAE…VVNE and GIAI…ISGG. The short motif at 97–99 is the NPA 1 element; it reads NPA. 3 consecutive transmembrane segments (helical) span residues 115 to 137, 152 to 174, and 181 to 203; these read VPAY…RLLF, TNLQ…ICGV, and VGEF…GGPV. Residues 209–211 carry the NPA 2 motif; it reads NPA. A helical transmembrane segment spans residues 225–247; it reads GIWIYLLAPVVGAIAGAWVYNIV. Residue Ser-262 is modified to Phosphoserine; by CPK.

This sequence belongs to the MIP/aquaporin (TC 1.A.8) family. NIP (TC 1.A.8.12) subfamily.

The protein resides in the symbiosome. Its subcellular location is the peribacteroid membrane. Aquaporins facilitate the transport of water and small neutral solutes across cell membranes. This aquaporin may function in transporting small molecules across the peribacteroid membranes. The chain is Nodulin-26 from Glycine max (Soybean).